The following is a 445-amino-acid chain: MREIVHLQAGQCGNQIGAKFWEVISDEHGIDPTGTYHGDSDLQLDRINVYYNEASGGKYVPRAVLVDLEPGTMDSVRSGAFGQVFRPDNFVFGQSGAGNNWAKGHYTEGAELVDSVLDVVRKEAESCDCLQGFQLTHSLGGGTGSGMGTLLISKIREEYPDRIMNTFSVVPSPKVSDTVVEPYNATLSVHQLVENTDETYCIDNEALYDICFRTLKLTTPSYGDLNHLVSATMSGVTTCLRFPGQLNADLRKLAVNMVPFPRLHFFMPGFAPLTSRGSQQYRSLTVPELTQQMFDGKNMMAACDPRHGRYLTVAAIFRGRMSMKEVDEQMLNVQNKNSSYFVEWIPNNVKTAVCDIPPRGLKMAATFIGNSTAIQELFKRISEQFTAMFRRKAFLHWYTGEGMDEMEFTEAESNMNDLVSEYQQYQDATAEEEGEFEEEGEEELA.

An MREI motif motif is present at residues 1 to 4; it reads MREI. GTP-binding residues include glutamine 11, glutamate 69, serine 138, glycine 142, threonine 143, glycine 144, asparagine 204, and asparagine 226. Residue glutamate 69 participates in Mg(2+) binding. The tract at residues 425 to 445 is disordered; the sequence is YQDATAEEEGEFEEEGEEELA. Over residues 429 to 445 the composition is skewed to acidic residues; the sequence is TAEEEGEFEEEGEEELA. The residue at position 438 (glutamate 438) is a 5-glutamyl polyglutamate.

The protein belongs to the tubulin family. In terms of assembly, dimer of alpha and beta chains. A typical microtubule is a hollow water-filled tube with an outer diameter of 25 nm and an inner diameter of 15 nM. Alpha-beta heterodimers associate head-to-tail to form protofilaments running lengthwise along the microtubule wall with the beta-tubulin subunit facing the microtubule plus end conferring a structural polarity. Microtubules usually have 13 protofilaments but different protofilament numbers can be found in some organisms and specialized cells. The cofactor is Mg(2+). In terms of processing, some glutamate residues at the C-terminus are polyglycylated, resulting in polyglycine chains on the gamma-carboxyl group. Glycylation is mainly limited to tubulin incorporated into axonemes (cilia and flagella) whereas glutamylation is prevalent in neuronal cells, centrioles, axonemes, and the mitotic spindle. Both modifications can coexist on the same protein on adjacent residues, and lowering polyglycylation levels increases polyglutamylation, and reciprocally. The precise function of polyglycylation is still unclear. Post-translationally, some glutamate residues at the C-terminus are polyglutamylated, resulting in polyglutamate chains on the gamma-carboxyl group. Polyglutamylation plays a key role in microtubule severing by spastin (SPAST). SPAST preferentially recognizes and acts on microtubules decorated with short polyglutamate tails: severing activity by SPAST increases as the number of glutamates per tubulin rises from one to eight, but decreases beyond this glutamylation threshold.

It localises to the cytoplasm. The protein resides in the cytoskeleton. Functionally, tubulin is the major constituent of microtubules, a cylinder consisting of laterally associated linear protofilaments composed of alpha- and beta-tubulin heterodimers. Microtubules grow by the addition of GTP-tubulin dimers to the microtubule end, where a stabilizing cap forms. Below the cap, tubulin dimers are in GDP-bound state, owing to GTPase activity of alpha-tubulin. The protein is Tubulin beta-1 chain of Gadus morhua (Atlantic cod).